We begin with the raw amino-acid sequence, 249 residues long: Probable transcriptional regulatory protein Wbm0670 (249 aa).

Belongs to the TACO1 family.

Its subcellular location is the cytoplasm. The sequence is that of Probable transcriptional regulatory protein Wbm0670 from Wolbachia sp. subsp. Brugia malayi (strain TRS).